The sequence spans 54 residues: Large ribosomal subunit protein bL33 (54 aa).

It belongs to the bacterial ribosomal protein bL33 family.

This chain is Large ribosomal subunit protein bL33, found in Frankia alni (strain DSM 45986 / CECT 9034 / ACN14a).